The following is a 140-amino-acid chain: Putative membrane protein ORF7 (140 aa).

The chain crosses the membrane as a helical span at residues 44 to 60 (TCAVSFFALFMLIIWVL). Positions 66–118 (PEGSTTRGTDAHTQTEGSTTRGTDAHTQTEGSRDQGSMTPEADDLTRPPLGHG) are disordered. The segment covering 68–103 (GSTTRGTDAHTQTEGSTTRGTDAHTQTEGSRDQGSM) has biased composition (polar residues).

It is found in the membrane. This Ictalurid herpesvirus 1 (strain Auburn) (IcHV-1) protein is Putative membrane protein ORF7 (ORF7).